The chain runs to 493 residues: Probable cytosol aminopeptidase (493 aa).

2 residues coordinate Mn(2+): Lys259 and Asp264. Lys271 is a catalytic residue. Residues Asp282, Asp341, and Glu343 each coordinate Mn(2+). The active site involves Arg345.

It belongs to the peptidase M17 family. Requires Mn(2+) as cofactor.

Its subcellular location is the cytoplasm. The catalysed reaction is Release of an N-terminal amino acid, Xaa-|-Yaa-, in which Xaa is preferably Leu, but may be other amino acids including Pro although not Arg or Lys, and Yaa may be Pro. Amino acid amides and methyl esters are also readily hydrolyzed, but rates on arylamides are exceedingly low.. It carries out the reaction Release of an N-terminal amino acid, preferentially leucine, but not glutamic or aspartic acids.. Its function is as follows. Presumably involved in the processing and regular turnover of intracellular proteins. Catalyzes the removal of unsubstituted N-terminal amino acids from various peptides. The polypeptide is Probable cytosol aminopeptidase (Bacillus cytotoxicus (strain DSM 22905 / CIP 110041 / 391-98 / NVH 391-98)).